The primary structure comprises 261 residues: Small ribosomal subunit protein eS1 (261 aa).

Over residues 1–18 the composition is skewed to basic residues; that stretch reads MAVGKNKRISKGKKGGKK. The segment at 1 to 22 is disordered; the sequence is MAVGKNKRISKGKKGGKKKAAD.

It belongs to the eukaryotic ribosomal protein eS1 family. Component of the small ribosomal subunit. Mature ribosomes consist of a small (40S) and a large (60S) subunit. The 40S subunit contains about 33 different proteins and 1 molecule of RNA (18S). The 60S subunit contains about 49 different proteins and 3 molecules of RNA (25S, 5.8S and 5S).

The protein localises to the cytoplasm. The sequence is that of Small ribosomal subunit protein eS1 from Cicer arietinum (Chickpea).